The sequence spans 297 residues: Glycerol-3-phosphate dehydrogenase [NAD(P)+] (297 aa).

W11, R33, and K79 together coordinate NADPH. 3 residues coordinate sn-glycerol 3-phosphate: K79, G107, and S109. Position 111 (A111) interacts with NADPH. Sn-glycerol 3-phosphate is bound by residues K161, D214, S224, R225, and N226. K161 serves as the catalytic Proton acceptor. R225 contributes to the NADPH binding site. NADPH-binding residues include V249 and E251.

It belongs to the NAD-dependent glycerol-3-phosphate dehydrogenase family.

Its subcellular location is the cytoplasm. It carries out the reaction sn-glycerol 3-phosphate + NAD(+) = dihydroxyacetone phosphate + NADH + H(+). It catalyses the reaction sn-glycerol 3-phosphate + NADP(+) = dihydroxyacetone phosphate + NADPH + H(+). It participates in membrane lipid metabolism; glycerophospholipid metabolism. Catalyzes the reduction of the glycolytic intermediate dihydroxyacetone phosphate (DHAP) to sn-glycerol 3-phosphate (G3P), the key precursor for phospholipid synthesis. The protein is Glycerol-3-phosphate dehydrogenase [NAD(P)+] of Campylobacter jejuni subsp. jejuni serotype O:2 (strain ATCC 700819 / NCTC 11168).